The chain runs to 255 residues: Probable transcriptional regulatory protein PCC8801_2028 (255 aa).

It belongs to the TACO1 family.

It localises to the cytoplasm. The polypeptide is Probable transcriptional regulatory protein PCC8801_2028 (Rippkaea orientalis (strain PCC 8801 / RF-1) (Cyanothece sp. (strain PCC 8801))).